A 348-amino-acid polypeptide reads, in one-letter code: Dihydroorotase (348 aa).

Residues His14 and His16 each contribute to the Zn(2+) site. Residues 16–18 (HLR) and Asn42 contribute to the substrate site. Zn(2+) contacts are provided by Lys100, His137, and His175. N6-carboxylysine is present on Lys100. Residue His137 coordinates substrate. Leu220 provides a ligand contact to substrate. Zn(2+) is bound at residue Asp248. Residue Asp248 is part of the active site. Substrate-binding residues include His252 and Ala264.

This sequence belongs to the metallo-dependent hydrolases superfamily. DHOase family. Class II DHOase subfamily. Homodimer. It depends on Zn(2+) as a cofactor.

The enzyme catalyses (S)-dihydroorotate + H2O = N-carbamoyl-L-aspartate + H(+). It participates in pyrimidine metabolism; UMP biosynthesis via de novo pathway; (S)-dihydroorotate from bicarbonate: step 3/3. In terms of biological role, catalyzes the reversible cyclization of carbamoyl aspartate to dihydroorotate. This is Dihydroorotase from Synechococcus sp. (strain CC9605).